Consider the following 325-residue polypeptide: MDTWTLLLVLHTSLLLPWAEGATPTLRFVAVGDWGGVPNAPFHTAREMANAKQIGKVVQMLGAHFILSLGDNFYFSGVQSVSDKRFQETFEDVFSDRSLQNVPWYVLAGNHDHIGNVSAQIAYSKVSKRWNFPSPFYRLRFRIPRTNVSVAIYMLDTVTLCGNSNDFLSQQPERPRNLELARTQLAWLKRHLADAKEDYVLVAGHYPVWSIAEHGPTHCLVKKLQPLLVKYGVTAYLCGHDHNLQYLQDENGVGYVLSGAGNFMDPSTQHQRSVPNGYLRFHYGAENSLGGFAYLEITPKEMTVTYMEASGKSLFKTRLPKRAKA.

A signal peptide spans 1–21; sequence MDTWTLLLVLHTSLLLPWAEG. Asparagine 116 and asparagine 147 each carry an N-linked (GlcNAc...) asparagine glycan.

Exists either as monomer or, after proteolytic processing, as a dimer of two chains linked by disulfide bond(s). The cofactor is Fe cation.

The protein localises to the lysosome. The enzyme catalyses a phosphate monoester + H2O = an alcohol + phosphate. The chain is Tartrate-resistant acid phosphatase type 5 (ACP5) from Oryctolagus cuniculus (Rabbit).